The sequence spans 489 residues: Rhamnulokinase (489 aa).

13–17 contributes to the ATP binding site; the sequence is ASSGR. Cys68 and Cys222 are oxidised to a cystine. Substrate-binding positions include Gly83 and 236–238; that span reads HDT. The Proton acceptor role is filled by Asp237. Thr259 contributes to the ATP binding site. Asn296 contacts substrate. Gln304 contributes to the ATP binding site. An intrachain disulfide couples Cys353 to Cys370. Residue Gly402 coordinates ATP. Cysteines 413 and 417 form a disulfide.

Belongs to the rhamnulokinase family. As to quaternary structure, monomer. The cofactor is Mg(2+).

The catalysed reaction is L-rhamnulose + ATP = L-rhamnulose 1-phosphate + ADP + H(+). Its pathway is carbohydrate degradation; L-rhamnose degradation; glycerone phosphate from L-rhamnose: step 2/3. In terms of biological role, involved in the catabolism of L-rhamnose (6-deoxy-L-mannose). Catalyzes the transfer of the gamma-phosphate group from ATP to the 1-hydroxyl group of L-rhamnulose to yield L-rhamnulose 1-phosphate. The chain is Rhamnulokinase from Escherichia coli O7:K1 (strain IAI39 / ExPEC).